Consider the following 453-residue polypeptide: Ribulose bisphosphate carboxylase large chain (453 aa).

Residues 1 to 2 (MS) constitute a propeptide that is removed on maturation. Pro-3 carries the post-translational modification N-acetylproline. Position 14 is an N6,N6,N6-trimethyllysine (Lys-14). Substrate contacts are provided by Asn-123 and Thr-173. Lys-175 acts as the Proton acceptor in catalysis. Residue Lys-177 coordinates substrate. Mg(2+) contacts are provided by Lys-201, Asp-203, and Glu-204. An N6-carboxylysine modification is found at Lys-201. His-294 acts as the Proton acceptor in catalysis. Substrate is bound by residues Arg-295, His-327, and Ser-379.

The protein belongs to the RuBisCO large chain family. Type I subfamily. In terms of assembly, heterohexadecamer of 8 large chains and 8 small chains; disulfide-linked. The disulfide link is formed within the large subunit homodimers. The cofactor is Mg(2+). Post-translationally, the disulfide bond which can form in the large chain dimeric partners within the hexadecamer appears to be associated with oxidative stress and protein turnover.

It is found in the plastid. Its subcellular location is the chloroplast. It carries out the reaction 2 (2R)-3-phosphoglycerate + 2 H(+) = D-ribulose 1,5-bisphosphate + CO2 + H2O. The catalysed reaction is D-ribulose 1,5-bisphosphate + O2 = 2-phosphoglycolate + (2R)-3-phosphoglycerate + 2 H(+). Functionally, ruBisCO catalyzes two reactions: the carboxylation of D-ribulose 1,5-bisphosphate, the primary event in carbon dioxide fixation, as well as the oxidative fragmentation of the pentose substrate in the photorespiration process. Both reactions occur simultaneously and in competition at the same active site. The polypeptide is Ribulose bisphosphate carboxylase large chain (Cruciata glabra (Slender crosswort)).